A 201-amino-acid chain; its full sequence is Superoxide dismutase [Mn] (201 aa).

Residues His-27, His-81, Asp-163, and His-167 each coordinate Mn(2+).

This sequence belongs to the iron/manganese superoxide dismutase family. As to quaternary structure, homodimer. Mn(2+) is required as a cofactor.

Its subcellular location is the secreted. The enzyme catalyses 2 superoxide + 2 H(+) = H2O2 + O2. Functionally, destroys superoxide anion radicals which are normally produced within the cells and which are toxic to biological systems. This is Superoxide dismutase [Mn] (sodA) from Streptococcus pyogenes serotype M1.